Consider the following 760-residue polypeptide: Xaa-Pro dipeptidyl-peptidase (760 aa).

Catalysis depends on charge relay system residues S349, D469, and H499.

Belongs to the peptidase S15 family. As to quaternary structure, homodimer.

The protein localises to the cytoplasm. It carries out the reaction Hydrolyzes Xaa-Pro-|- bonds to release unblocked, N-terminal dipeptides from substrates including Ala-Pro-|-p-nitroanilide and (sequentially) Tyr-Pro-|-Phe-Pro-|-Gly-Pro-|-Ile.. Removes N-terminal dipeptides sequentially from polypeptides having unsubstituted N-termini provided that the penultimate residue is proline. In Streptococcus pyogenes serotype M49 (strain NZ131), this protein is Xaa-Pro dipeptidyl-peptidase.